The sequence spans 1571 residues: Guanine nucleotide-releasing factor 2 (1571 aa).

Disordered stretches follow at residues 28–85 (LPPH…RDTN), 202–271 (INSG…KLAR), and 287–316 (MRTTNNTLGRSHSPHSPRTKHGTKAPPTTE). Basic residues predominate over residues 55–73 (QLHHHHHQQHHHNHHRLWK). Residues 74-83 (TQRQSWSPRD) show a composition bias toward polar residues. The segment covering 230–248 (TPGGSSRVGGAGAGGGGGV) has biased composition (gly residues). The segment covering 287 to 297 (MRTTNNTLGRS) has biased composition (polar residues). Basic residues predominate over residues 298–309 (HSPHSPRTKHGT). A phosphoserine mark is found at serine 496 and serine 523. Disordered stretches follow at residues 513-580 (HNVN…QASP), 614-646 (RSRSPDENSQCSFDSALNHSREEEDQQQQHQHL), 695-719 (GEGVAAAASGDGETNSNRHSNESGF), 728-747 (STQTTDYSVQSSTKSSSSNS), 776-868 (QRHI…SEVA), and 879-898 (LNHHPHTASAGQLQQWHSKH). Threonine 524 carries the phosphothreonine modification. The residue at position 526 (serine 526) is a Phosphoserine. Residues 532-550 (SPPPKPPLPNRASNPPPLP) are compositionally biased toward pro residues. The short motif at 546-556 (PPPLPPKRRSQ) is the SH3-binding element. The segment covering 556–579 (QPSASAGTVGVGCSSSTSTSNQAS) has biased composition (low complexity). At serine 615 the chain carries Phosphoserine. Over residues 620–631 (ENSQCSFDSALN) the composition is skewed to polar residues. Residues 697-707 (GVAAAASGDGE) are compositionally biased toward low complexity. Residues 708–718 (TNSNRHSNESG) show a composition bias toward polar residues. Composition is skewed to low complexity over residues 735–747 (SVQSSTKSSSSNS) and 780–824 (SSSS…DLAP). The SH3-binding signature appears at 820-831 (ADLAPALPPKSI). Over residues 851–866 (VQSSSGWASHRSSQSE) the composition is skewed to polar residues. 2 consecutive short sequence motifs (SH3-binding) follow at residues 924–935 (DQEPPPLPIKKK) and 986–997 (LEMPPALPPKNY). The tract at residues 1013–1038 (PVIVTTPPPSPKPTLGENGSTGRPDS) is disordered. Positions 1170–1292 (DGPEVKGGYI…LRNKFVEKVT (123 aa)) constitute an N-terminal Ras-GEF domain. One can recognise a Ras-GEF domain in the interval 1339–1564 (KSLEIAEQMT…WQISEKIKPR (226 aa)).

As to expression, ubiquitous.

Guanine nucleotide-releasing protein that binds to SH3 domain of Crk. Transduces signals from Crk to activate RAS. Also involved in MAPK activation. The chain is Guanine nucleotide-releasing factor 2 (C3G) from Drosophila melanogaster (Fruit fly).